The following is a 426-amino-acid chain: Elongation factor 1-alpha (426 aa).

The region spanning 5 to 221 is the tr-type G domain; sequence KPHMNLAVIG…DTFKEPDKPT (217 aa). The G1 stretch occupies residues 14-21; the sequence is GHIDHGKS. Residue 14–21 coordinates GTP; it reads GHIDHGKS. Residue Ser-21 coordinates Mg(2+). The tract at residues 70 to 74 is G2; the sequence is GITID. A G3 region spans residues 91-94; the sequence is DCPG. GTP contacts are provided by residues 91–95 and 146–149; these read DCPGH and NKMD. Residues 146-149 are G4; sequence NKMD. The tract at residues 185-187 is G5; the sequence is SSF.

It belongs to the TRAFAC class translation factor GTPase superfamily. Classic translation factor GTPase family. EF-Tu/EF-1A subfamily.

It is found in the cytoplasm. The catalysed reaction is GTP + H2O = GDP + phosphate + H(+). Functionally, GTP hydrolase that promotes the GTP-dependent binding of aminoacyl-tRNA to the A-site of ribosomes during protein biosynthesis. This is Elongation factor 1-alpha from Methanosphaerula palustris (strain ATCC BAA-1556 / DSM 19958 / E1-9c).